The chain runs to 90 residues: Small ribosomal subunit protein uS15c (90 aa).

It belongs to the universal ribosomal protein uS15 family. As to quaternary structure, part of the 30S ribosomal subunit.

The protein localises to the plastid. It is found in the chloroplast. This chain is Small ribosomal subunit protein uS15c (rps15), found in Dioscorea elephantipes (Elephant's foot yam).